We begin with the raw amino-acid sequence, 511 residues long: Adenosine deaminase 2 (511 aa).

Positions 1 to 29 (MLVDGPSERPALCFLLLAVAMSFFGSALS) are cleaved as a signal peptide. A dimerization region spans residues 30 to 100 (IDETRAHLLL…HLIERSQVFN (71 aa)). Residues His-112 and His-114 each coordinate Zn(2+). Asp-115 serves as a coordination point for substrate. N-linked (GlcNAc...) asparagine glycosylation is present at Asn-127. Positions 127-185 (NVTYRPHCHICFTPRGIMQFRFAHPTPRPSEKCSKWILLEDYRKRVQNVTEFDDSLLRN) are PRB domain. Cys-137 and Cys-159 are oxidised to a cystine. Residues Asn-174 and Asn-185 are each glycosylated (N-linked (GlcNAc...) asparagine). Substrate contacts are provided by residues 204–211 (WSKFETIF), His-293, and Gly-326. His-356 lines the Zn(2+) pocket. The Proton donor role is filled by Glu-359. The N-linked (GlcNAc...) asparagine glycan is linked to Asn-378. Residue His-384 is the Proton acceptor of the active site. Position 441 (Asp-441) interacts with Zn(2+). Substrate is bound at residue Asp-442.

The protein belongs to the metallo-dependent hydrolases superfamily. Adenosine and AMP deaminases family. ADGF subfamily. In terms of assembly, homodimer. Interacts with adenosine receptors. Binds heparin. The cofactor is Zn(2+). As to expression, detected in blood plasma (at protein level). Widely expressed, with most abundant expression in human adult heart, lung, lymphoblasts, and placenta as well as fetal lung, liver, and kidney. In embryo, expressed in the outflow tract and atrium of the developing heart, the VII/VIII cranial nerve ganglion, and the notochord.

The protein localises to the secreted. The catalysed reaction is adenosine + H2O + H(+) = inosine + NH4(+). In terms of biological role, adenosine deaminase that may contribute to the degradation of extracellular adenosine, a signaling molecule that controls a variety of cellular responses. Requires elevated adenosine levels for optimal enzyme activity. Binds to cell surfaces via proteoglycans and may play a role in the regulation of cell proliferation and differentiation, independently of its enzyme activity. The chain is Adenosine deaminase 2 from Homo sapiens (Human).